The chain runs to 487 residues: ATP-dependent rRNA helicase RRP3 (487 aa).

A disordered region spans residues 22-67 (IKRKALEKQQQAHANEPSPSDEDSAQSNSKDSNSNEQPEESEEIFE). Residues 67 to 95 (ESFTELDLVPELIEACKNLNYNKPTPIQS) carry the Q motif motif. One can recognise a Helicase ATP-binding domain in the interval 98–270 (IPPALKGSDI…RASLTNPVKC (173 aa)). Residue 111–118 (AQTGSGKT) coordinates ATP. Residues 217–220 (DEAD) carry the DEAD box motif. A Helicase C-terminal domain is found at 298 to 442 (LIYLLNEFIG…ENVDKDAILA (145 aa)). Residues 459 to 487 (NRRNKEKQARGKGRRGRMATRDNMDREER) are disordered. Over residues 477–487 (ATRDNMDREER) the composition is skewed to basic and acidic residues.

This sequence belongs to the DEAD box helicase family. DDX47/RRP3 subfamily. Interacts with the SSU processome.

It localises to the nucleus. The catalysed reaction is ATP + H2O = ADP + phosphate + H(+). Functionally, ATP-dependent rRNA helicase required for pre-ribosomal RNA processing. Involved in the maturation of the 35S-pre-rRNA and to its cleavage to mature 18S rRNA. The sequence is that of ATP-dependent rRNA helicase RRP3 from Kluyveromyces lactis (strain ATCC 8585 / CBS 2359 / DSM 70799 / NBRC 1267 / NRRL Y-1140 / WM37) (Yeast).